We begin with the raw amino-acid sequence, 430 residues long: Long-chain specific acyl-CoA dehydrogenase, mitochondrial (430 aa).

The transit peptide at 1–30 (MAARLLRGSLRVLGGHRAPRQLPAARCSHS) directs the protein to the mitochondrion. Residue K42 is modified to N6-acetyllysine. Residue S54 is modified to Phosphoserine. An N6-acetyllysine; alternate mark is found at K66 and K81. 2 positions are modified to N6-succinyllysine; alternate: K66 and K81. An N6-acetyllysine mark is found at K92 and K95. An N6-succinyllysine modification is found at K165. Residues 170 to 179 (IAMTEPGAGS) and 203 to 205 (FIS) contribute to the FAD site. S179 serves as a coordination point for substrate. Residue 227 to 228 (AH) participates in substrate binding. At K240 the chain carries N6-succinyllysine. N6-acetyllysine; alternate is present on residues K254 and K279. K254 and K279 each carry N6-succinyllysine; alternate. Substrate is bound by residues Y282 and 289-292 (PQER). Catalysis depends on E291, which acts as the Proton acceptor. Residue R317 participates in FAD binding. Residue K318 is modified to N6-acetyllysine. K322 is modified (N6-acetyllysine; alternate). At K322 the chain carries N6-succinyllysine; alternate. FAD is bound at residue Q328. Residue K358 is modified to N6-acetyllysine. A Phosphoserine modification is found at S362. 385 to 389 (QLHGG) is a binding site for FAD. 412-413 (GG) provides a ligand contact to substrate. FAD is bound at residue 414–416 (TNE).

This sequence belongs to the acyl-CoA dehydrogenase family. In terms of assembly, homotetramer. FAD serves as cofactor. Acetylation at Lys-318 and Lys-322 in proximity of the cofactor-binding sites strongly reduces catalytic activity. These sites are deacetylated by SIRT3.

It localises to the mitochondrion matrix. The catalysed reaction is a long-chain 2,3-saturated fatty acyl-CoA + oxidized [electron-transfer flavoprotein] + H(+) = a long-chain (2E)-enoyl-CoA + reduced [electron-transfer flavoprotein]. It catalyses the reaction hexanoyl-CoA + oxidized [electron-transfer flavoprotein] + H(+) = (2E)-hexenoyl-CoA + reduced [electron-transfer flavoprotein]. The enzyme catalyses octanoyl-CoA + oxidized [electron-transfer flavoprotein] + H(+) = (2E)-octenoyl-CoA + reduced [electron-transfer flavoprotein]. It carries out the reaction decanoyl-CoA + oxidized [electron-transfer flavoprotein] + H(+) = (2E)-decenoyl-CoA + reduced [electron-transfer flavoprotein]. The catalysed reaction is dodecanoyl-CoA + oxidized [electron-transfer flavoprotein] + H(+) = (2E)-dodecenoyl-CoA + reduced [electron-transfer flavoprotein]. It catalyses the reaction tetradecanoyl-CoA + oxidized [electron-transfer flavoprotein] + H(+) = (2E)-tetradecenoyl-CoA + reduced [electron-transfer flavoprotein]. The enzyme catalyses oxidized [electron-transfer flavoprotein] + hexadecanoyl-CoA + H(+) = (2E)-hexadecenoyl-CoA + reduced [electron-transfer flavoprotein]. It carries out the reaction octadecanoyl-CoA + oxidized [electron-transfer flavoprotein] + H(+) = (2E)-octadecenoyl-CoA + reduced [electron-transfer flavoprotein]. The catalysed reaction is eicosanoyl-CoA + oxidized [electron-transfer flavoprotein] + H(+) = (2E)-eicosenoyl-CoA + reduced [electron-transfer flavoprotein]. It catalyses the reaction docosanoyl-CoA + oxidized [electron-transfer flavoprotein] + H(+) = (2E)-docosenoyl-CoA + reduced [electron-transfer flavoprotein]. The enzyme catalyses tetracosanoyl-CoA + oxidized [electron-transfer flavoprotein] + H(+) = (2E)-tetracosenoyl-CoA + reduced [electron-transfer flavoprotein]. It carries out the reaction (5E)-tetradecenoyl-CoA + oxidized [electron-transfer flavoprotein] + H(+) = (2E,5E)-tetradecadienoyl-CoA + reduced [electron-transfer flavoprotein]. The catalysed reaction is (5Z)-tetradecenoyl-CoA + oxidized [electron-transfer flavoprotein] + H(+) = (2E,5Z)-tetradecadienoyl-CoA + reduced [electron-transfer flavoprotein]. It catalyses the reaction oxidized [electron-transfer flavoprotein] + (9Z)-octadecenoyl-CoA + H(+) = (2E,9Z)-octadecadienoyl-CoA + reduced [electron-transfer flavoprotein]. The protein operates within lipid metabolism; mitochondrial fatty acid beta-oxidation. Long-chain specific acyl-CoA dehydrogenase is one of the acyl-CoA dehydrogenases that catalyze the first step of mitochondrial fatty acid beta-oxidation, an aerobic process breaking down fatty acids into acetyl-CoA and allowing the production of energy from fats. The first step of fatty acid beta-oxidation consists in the removal of one hydrogen from C-2 and C-3 of the straight-chain fatty acyl-CoA thioester, resulting in the formation of trans-2-enoyl-CoA. Among the different mitochondrial acyl-CoA dehydrogenases, long-chain specific acyl-CoA dehydrogenase can act on saturated and unsaturated acyl-CoAs with 6 to 24 carbons with a preference for 8 to 18 carbons long primary chains. This is Long-chain specific acyl-CoA dehydrogenase, mitochondrial from Homo sapiens (Human).